Here is a 165-residue protein sequence, read N- to C-terminus: Phosphopantetheine adenylyltransferase (165 aa).

Serine 10 is a binding site for substrate. ATP contacts are provided by residues 10–11 and histidine 18; that span reads SF. Residues lysine 42, leucine 74, and arginine 88 each coordinate substrate. ATP-binding positions include 89–91, glutamate 99, and 124–130; these read GLR and WFYTSST.

It belongs to the bacterial CoaD family. Homohexamer. It depends on Mg(2+) as a cofactor.

It is found in the cytoplasm. It catalyses the reaction (R)-4'-phosphopantetheine + ATP + H(+) = 3'-dephospho-CoA + diphosphate. It functions in the pathway cofactor biosynthesis; coenzyme A biosynthesis; CoA from (R)-pantothenate: step 4/5. Functionally, reversibly transfers an adenylyl group from ATP to 4'-phosphopantetheine, yielding dephospho-CoA (dPCoA) and pyrophosphate. This chain is Phosphopantetheine adenylyltransferase, found in Syntrophus aciditrophicus (strain SB).